The chain runs to 786 residues: E3 ubiquitin-protein ligase UHRF1 (786 aa).

The region spanning 1–78 (MWIQVRTMDG…IQLLVRQSLV (78 aa)) is the Ubiquitin-like domain. Phosphoserine is present on residues Ser-76, Ser-98, and Ser-102. Residues 82–134 (PVPSSSGGSKERDSELSDTDSGCGLAQSESDKSSNSGEAANEPEGKADEDECD) form a disordered region. Tudor-like stretches follow at residues 139-213 (GLYK…ARAR) and 220-287 (DLQV…IERP). Lys-283 is covalently cross-linked (Glycyl lysine isopeptide (Lys-Gly) (interchain with G-Cter in SUMO2)). The interval 300–305 (RKSGPS) is linker. Position 302 is a phosphoserine; by PKA (Ser-302). Residues 303-370 (GPSCKHCKDD…EWYCPDCRID (68 aa)) form a PHD-type zinc finger. Histone H3R2me0 binding regions lie at residues 337 to 341 (CDECD) and 357 to 359 (PPE). The residue at position 372 (Ser-372) is a Phosphoserine. Residue Lys-389 forms a Glycyl lysine isopeptide (Lys-Gly) (interchain with G-Cter in SUMO2) linkage. Lys-403 is subject to N6-acetyllysine. The YDG domain maps to 423–586 (GPIPGIPVGT…FLVWRFLLRR (164 aa)). The tract at residues 449 to 450 (HV) is required to promote base flipping. DNA contacts are provided by residues 467-468 (AG) and Asp-473. Required for formation of a 5-methylcytosine-binding pocket regions lie at residues 470–473 (YEDD) and 482–485 (YTGS). N6-acetyllysine; alternate is present on Lys-550. Lys-550 participates in a covalent cross-link: Glycyl lysine isopeptide (Lys-Gly) (interchain with G-Cter in SUMO2); alternate. The tract at residues 626-679 (NSKQAALDKEEEDGEEGFTSPRKGKRKSKSAGGDGSSRGTPKKTKVEPYSLTTQ) is disordered. Ser-645 bears the Phosphoserine; by CDK1 mark. 2 positions are modified to phosphoserine: Ser-655 and Ser-662. Residue Lys-670 forms a Glycyl lysine isopeptide (Lys-Gly) (interchain with G-Cter in SUMO2) linkage. The RING-type zinc finger occupies 717–756 (CICCQELVFRPITTVCQHNVCKDCLDRSFKAQVFSCPACR).

Interacts with DNMT3A and DNMT3B. Interacts with DNMT1; the interaction is direct. Interacts with USP7; leading to its deubiquitination. Interacts with histone H3. Interacts with HDAC1, but not with HDAC2. Interacts with BLTP3A. Interacts with PML. Interacts with EHMT2. Binds methylated CpG containing oligonucleotides. Interacts with ZNF263; recruited to the SIX3 promoter along with other proteins involved in chromatin modification and transcriptional corepression where it contributes to transcriptional repression. Interacts with UHRF2. Interacts with FANCD2. Interacts with TET1 isoform 2; this interaction induces the recruitment of TET1 isoform 2 to replicating heterochromatin. Post-translationally, phosphorylation at Ser-302 of the linker region decreases the binding to H3K9me3. Phosphorylation at Ser-645 by CDK1 during M phase impairs interaction with USP7, preventing deubiquitination and leading to degradation by the proteasome. In terms of processing, ubiquitinated; which leads to proteasomal degradation. Autoubiquitinated; interaction with USP7 leads to deubiquitination and prevents degradation. Ubiquitination and degradation takes place during M phase, when phosphorylation at Ser-645 prevents interaction with USP7 and subsequent deubiquitination. Polyubiquitination may be stimulated by DNA damage.

It is found in the nucleus. The catalysed reaction is S-ubiquitinyl-[E2 ubiquitin-conjugating enzyme]-L-cysteine + [acceptor protein]-L-lysine = [E2 ubiquitin-conjugating enzyme]-L-cysteine + N(6)-ubiquitinyl-[acceptor protein]-L-lysine.. Its pathway is protein modification; protein ubiquitination. In terms of biological role, multidomain protein that acts as a key epigenetic regulator by bridging DNA methylation and chromatin modification. Specifically recognizes and binds hemimethylated DNA at replication forks via its YDG domain and recruits DNMT1 methyltransferase to ensure faithful propagation of the DNA methylation patterns through DNA replication. In addition to its role in maintenance of DNA methylation, also plays a key role in chromatin modification: through its tudor-like regions and PHD-type zinc fingers, specifically recognizes and binds histone H3 trimethylated at 'Lys-9' (H3K9me3) and unmethylated at 'Arg-2' (H3R2me0), respectively, and recruits chromatin proteins. Enriched in pericentric heterochromatin where it recruits different chromatin modifiers required for this chromatin replication. Also localizes to euchromatic regions where it negatively regulates transcription possibly by impacting DNA methylation and histone modifications. Has E3 ubiquitin-protein ligase activity by mediating the ubiquitination of target proteins such as histone H3 and PML. It is still unclear how E3 ubiquitin-protein ligase activity is related to its role in chromatin in vivo. Plays a role in DNA repair by cooperating with UHRF2 to ensure recruitment of FANCD2 to interstrand cross-links (ICLs) leading to FANCD2 activation. Plays a pivotal role in the establishment of correct spindle architecture by catalyzing the 'Lys-63'-linked ubiquitination of KIF11, thereby controlling KIF11 localization on the spindle. In Bos taurus (Bovine), this protein is E3 ubiquitin-protein ligase UHRF1 (UHRF1).